The primary structure comprises 503 residues: Maturase K (503 aa).

This sequence belongs to the intron maturase 2 family. MatK subfamily.

It localises to the plastid. It is found in the chloroplast. In terms of biological role, usually encoded in the trnK tRNA gene intron. Probably assists in splicing its own and other chloroplast group II introns. This is Maturase K from Rosa gigantea (Giant tea rose).